The primary structure comprises 122 residues: Large ribosomal subunit protein uL14 (122 aa).

The protein belongs to the universal ribosomal protein uL14 family. In terms of assembly, part of the 50S ribosomal subunit. Forms a cluster with proteins L3 and L19. In the 70S ribosome, L14 and L19 interact and together make contacts with the 16S rRNA in bridges B5 and B8.

Functionally, binds to 23S rRNA. Forms part of two intersubunit bridges in the 70S ribosome. The polypeptide is Large ribosomal subunit protein uL14 (Leifsonia xyli subsp. xyli (strain CTCB07)).